Reading from the N-terminus, the 413-residue chain is Peptidase T (413 aa).

H82 contacts Zn(2+). Residue D84 is part of the active site. D144 contacts Zn(2+). Residue E178 is the Proton acceptor of the active site. Zn(2+)-binding residues include E179, D201, and H383.

This sequence belongs to the peptidase M20B family. Homotrimer. Requires Zn(2+) as cofactor.

Its subcellular location is the cytoplasm. The enzyme catalyses Release of the N-terminal residue from a tripeptide.. With respect to regulation, totally inhibited by EDTA, EGTA, and 1,10-phenanthroline. Strongly inhibited by divalent cations such as Cu(2+), Cd(2+), Co(2+) and Mn(2+). Partially inhibited by the reducing agents 2-mercaptoethanol and dithiothreitol. In terms of biological role, cleaves the N-terminal amino acid of tripeptides. Shows broad substrate specificity, exhibiting maximum activity against hydrophobic tripeptides, with the highest activity for Met-Gly-Gly. Therefore this enzyme may play an important role in flavor formation during cheese ripening. Is also able to slowly hydrolyze some hydrophobic dipeptides, but displays no activity against tetrapeptides and the tripeptide Phe-Gly-Gly. In Lactobacillus helveticus (Lactobacillus suntoryeus), this protein is Peptidase T (pepT).